A 388-amino-acid polypeptide reads, in one-letter code: Arginine biosynthesis bifunctional protein ArgJ 2 (388 aa).

5 residues coordinate substrate: Thr-145, Lys-167, Thr-178, Glu-257, and Asn-381. Residue Thr-178 is the Nucleophile of the active site.

This sequence belongs to the ArgJ family. In terms of assembly, heterotetramer of two alpha and two beta chains.

The protein localises to the cytoplasm. It carries out the reaction N(2)-acetyl-L-ornithine + L-glutamate = N-acetyl-L-glutamate + L-ornithine. The enzyme catalyses L-glutamate + acetyl-CoA = N-acetyl-L-glutamate + CoA + H(+). Its pathway is amino-acid biosynthesis; L-arginine biosynthesis; L-ornithine and N-acetyl-L-glutamate from L-glutamate and N(2)-acetyl-L-ornithine (cyclic): step 1/1. It functions in the pathway amino-acid biosynthesis; L-arginine biosynthesis; N(2)-acetyl-L-ornithine from L-glutamate: step 1/4. Functionally, catalyzes two activities which are involved in the cyclic version of arginine biosynthesis: the synthesis of N-acetylglutamate from glutamate and acetyl-CoA as the acetyl donor, and of ornithine by transacetylation between N(2)-acetylornithine and glutamate. This is Arginine biosynthesis bifunctional protein ArgJ 2 from Clostridium acetobutylicum (strain ATCC 824 / DSM 792 / JCM 1419 / IAM 19013 / LMG 5710 / NBRC 13948 / NRRL B-527 / VKM B-1787 / 2291 / W).